A 602-amino-acid chain; its full sequence is Beta-(1--&gt;2)glucan export ATP-binding/permease protein NdvA (602 aa).

In terms of domain architecture, ABC transmembrane type-1 spans 21–311; sequence GWTLAVANLL…VVSFVNSLMM (291 aa). 6 helical membrane-spanning segments follow: residues 22–42, 68–88, 146–166, 167–187, 254–274, and 276–296; these read WTLA…PVLF, LLAA…TVAL, EHFA…YINW, RLAI…TLVV, VITR…GIAL, and QQGL…TLLI. The ABC transporter domain occupies 345–579; it reads VEFLDVSFSY…RGRFAELARA (235 aa). An ATP-binding site is contributed by 378 to 385; the sequence is GATGAGKS.

This sequence belongs to the ABC transporter superfamily. Beta-(1--&gt;2)glucan exporter (TC 3.A.1.108.1) family. Homodimer.

The protein localises to the cell inner membrane. It catalyses the reaction [(1-&gt;2)-beta-D-glucosyl](n)(in) + ATP + H2O = [(1-&gt;2)-beta-D-glucosyl](n)(out) + ADP + phosphate + H(+). Its function is as follows. Involved in beta-(1--&gt;2)glucan export. Transmembrane domains (TMD) form a pore in the inner membrane and the ATP-binding domain (NBD) is responsible for energy generation. This is Beta-(1--&gt;2)glucan export ATP-binding/permease protein NdvA from Rhodopseudomonas palustris (strain BisB5).